Reading from the N-terminus, the 435-residue chain is Histidinol dehydrogenase (435 aa).

NAD(+) contacts are provided by tyrosine 131, glutamine 189, and asparagine 212. The substrate site is built by serine 238, glutamine 260, and histidine 263. Positions 260 and 263 each coordinate Zn(2+). Residues glutamate 327 and histidine 328 each act as proton acceptor in the active site. 4 residues coordinate substrate: histidine 328, aspartate 361, glutamate 415, and histidine 420. Aspartate 361 is a Zn(2+) binding site. Residue histidine 420 coordinates Zn(2+).

This sequence belongs to the histidinol dehydrogenase family. Homodimer. Zn(2+) is required as a cofactor.

The catalysed reaction is L-histidinol + 2 NAD(+) + H2O = L-histidine + 2 NADH + 3 H(+). It participates in amino-acid biosynthesis; L-histidine biosynthesis; L-histidine from 5-phospho-alpha-D-ribose 1-diphosphate: step 9/9. Catalyzes the sequential NAD-dependent oxidations of L-histidinol to L-histidinaldehyde and then to L-histidine. This chain is Histidinol dehydrogenase (hisD), found in Buchnera aphidicola subsp. Schizaphis graminum (strain Sg).